The primary structure comprises 450 residues: Putative receptor-like protein kinase At1g72540 (450 aa).

T73 is subject to Phosphothreonine. The Protein kinase domain maps to 84-365; sequence FSKYNFLGEG…TVVKTLEPIL (282 aa). Residues 90–98 and K119 each bind ATP; that span reads LGEGGFGEV. Y164 bears the Phosphotyrosine mark. D214 acts as the Proton acceptor in catalysis. S218 is modified (phosphoserine). T254 is modified (phosphothreonine). Y262 is modified (phosphotyrosine).

The protein belongs to the protein kinase superfamily. Ser/Thr protein kinase family.

It catalyses the reaction L-seryl-[protein] + ATP = O-phospho-L-seryl-[protein] + ADP + H(+). The catalysed reaction is L-threonyl-[protein] + ATP = O-phospho-L-threonyl-[protein] + ADP + H(+). The chain is Putative receptor-like protein kinase At1g72540 from Arabidopsis thaliana (Mouse-ear cress).